Consider the following 318-residue polypeptide: Methionyl-tRNA formyltransferase (318 aa).

A (6S)-5,6,7,8-tetrahydrofolate-binding site is contributed by 112–115 (SILP).

It belongs to the Fmt family.

The catalysed reaction is L-methionyl-tRNA(fMet) + (6R)-10-formyltetrahydrofolate = N-formyl-L-methionyl-tRNA(fMet) + (6S)-5,6,7,8-tetrahydrofolate + H(+). Attaches a formyl group to the free amino group of methionyl-tRNA(fMet). The formyl group appears to play a dual role in the initiator identity of N-formylmethionyl-tRNA by promoting its recognition by IF2 and preventing the misappropriation of this tRNA by the elongation apparatus. The sequence is that of Methionyl-tRNA formyltransferase from Shewanella sp. (strain W3-18-1).